A 388-amino-acid polypeptide reads, in one-letter code: S-adenosylmethionine synthase 1 (388 aa).

Residue Glu-11 participates in Mg(2+) binding. His-17 serves as a coordination point for ATP. K(+) is bound at residue Glu-45. Residues Glu-58 and Gln-101 each contribute to the L-methionine site. Residues 168-170 (DAK), 233-236 (SGRF), Asp-244, 250-251 (RK), Ala-267, Lys-271, and Lys-275 each bind ATP. Asp-244 lines the L-methionine pocket. Lys-275 contacts L-methionine.

Belongs to the AdoMet synthase family. As to quaternary structure, homotetramer. The cofactor is Mn(2+). Requires Mg(2+) as cofactor. Co(2+) is required as a cofactor. It depends on K(+) as a cofactor. In terms of tissue distribution, mostly in Roots.

The protein resides in the cytoplasm. The enzyme catalyses L-methionine + ATP + H2O = S-adenosyl-L-methionine + phosphate + diphosphate. Its pathway is amino-acid biosynthesis; S-adenosyl-L-methionine biosynthesis; S-adenosyl-L-methionine from L-methionine: step 1/1. Functionally, catalyzes the formation of S-adenosylmethionine from methionine and ATP. The reaction comprises two steps that are both catalyzed by the same enzyme: formation of S-adenosylmethionine (AdoMet) and triphosphate, and subsequent hydrolysis of the triphosphate. This Pinus contorta (Shore pine) protein is S-adenosylmethionine synthase 1 (SAMS1).